The chain runs to 477 residues: Tripartite motif-containing protein 72 (477 aa).

The Zn(2+) site is built by leucine 14, glutamine 17, proline 29, cysteine 31, threonine 34, glutamine 37, threonine 53, proline 56, glycine 86, leucine 89, valine 97, glutamate 100, leucine 105, glycine 108, glycine 114, and lysine 117. The segment at 16–59 (CQLCLELFRAPVTPECGHTFCQGCLTGVPKNQDQNGSTPCPTCQ) adopts an RING-type zinc-finger fold. The B box-type zinc finger occupies 83-124 (VPQGHCLEHMDPLSVYCEQDKELICGVCASLGKHKGHNIITA). Positions 135-232 (LPQQQVILQE…QMEGVLKDVE (98 aa)) form a coiled coil. Residues 272–476 (DEFKFQVWRK…LKIFYPPAEQ (205 aa)) form the B30.2/SPRY domain.

This sequence belongs to the TRIM/RBCC family. Homodimer. Homooligomer; disulfide-linked. Oligomerizes on the phospholipid membrane. Disulfide bond formation at Cys-244 occurs in case of membrane damage that cause the entry of the oxidized milieu of the extracellular space, resulting in homooligomerization.

It localises to the cell membrane. It is found in the sarcolemma. Its subcellular location is the cytoplasmic vesicle membrane. It carries out the reaction S-ubiquitinyl-[E2 ubiquitin-conjugating enzyme]-L-cysteine + [acceptor protein]-L-lysine = [E2 ubiquitin-conjugating enzyme]-L-cysteine + N(6)-ubiquitinyl-[acceptor protein]-L-lysine.. It functions in the pathway protein modification; protein ubiquitination. With respect to regulation, specifically binds phosphatidylserine. The binding to phospholipids enhances ubiquitination activity. In terms of biological role, muscle-specific E3 ubiquitin-protein ligase that plays a central role in cell membrane repair by nucleating the assembly of the repair machinery at injury sites. Acts as a sensor of oxidation: upon membrane damage, entry of extracellular oxidative environment results in disulfide bond formation and homooligomerization at the injury site. This oligomerization acts as a nucleation site for recruitment of TRIM72-containing vesicles to the injury site, leading to membrane patch formation. Probably acts upstream of the Ca(2+)-dependent membrane resealing process. Required for transport of DYSF to sites of cell injury during repair patch formation. Regulates membrane budding and exocytosis. May be involved in the regulation of the mobility of KCNB1-containing endocytic vesicles. The protein is Tripartite motif-containing protein 72 (trim72) of Xenopus laevis (African clawed frog).